A 598-amino-acid chain; its full sequence is (-)-endo-fenchol synthase, chloroplastic (598 aa).

The N-terminal 34 residues, 1 to 34 (MWSTISISMNVAILKKPLNFLHNSNNKASNPRCV), are a transit peptide targeting the chloroplast. Residues D351, D355, D495, T499, and E503 each contribute to the Mg(2+) site. Positions 351-355 (DDVYD) match the DDXXD motif motif.

Belongs to the terpene synthase family. The cofactor is Mg(2+). It depends on Mn(2+) as a cofactor.

Its subcellular location is the plastid. The protein localises to the chloroplast. The enzyme catalyses (2E)-geranyl diphosphate + H2O = (1S,2S,4R)-endo-fenchol + diphosphate. It participates in secondary metabolite biosynthesis; terpenoid biosynthesis. Its function is as follows. Monoterpene synthase that catalyzes the formation of fenchol from geranyl diphosphate. In Ocimum basilicum (Sweet basil), this protein is (-)-endo-fenchol synthase, chloroplastic (FES).